Consider the following 91-residue polypeptide: UPF0512 protein E (91 aa).

Low complexity predominate over residues methionine 1 to asparagine 25. The segment at methionine 1–arginine 26 is disordered.

This sequence belongs to the UPF0512 family.

In Dictyostelium discoideum (Social amoeba), this protein is UPF0512 protein E.